The sequence spans 441 residues: MHNPQHYMTGFGNEFATEAVAGSLPVGQNSPQRVAHGLYAEQLSGTAFTAPRGENRRSWLYRIRPAAVHGRFSLIEQSRLHNDFGGGPVPPDQMRWSPLPLPATPTDFVDGLYTMAGNGSPEAMTGVAVHLYAANASMHGRFFYNADGELLLVPQLGRLRVCTELGVLELEPQQVGVIPRGVRFRVELLDSAARGYVCENFGGLLRLPDLGPIGANGLANPRDFETPRAAFEQRDGAFELVAKFQGDLWRADIDHSPLDVVAWHGNYAPYRYDLRRFNTIGSISFDHPDPSIFTVLTSPSDTHGTANMDFAIFPPRWLVAQHTFRPPWFHRNVASEFMGLVHGVYDAKAEGFAPGGASLHNCMSGHGPDAATFDKASQADLTRPDVIAETMAFMFETRAVLRPTQQALSAAHRQADYQQCWSGLRAAFQHPPAKNTTSVLR.

His287 (proton acceptor) is an active-site residue. Fe cation-binding residues include His330 and Glu336. Homogentisate-binding residues include Tyr345 and His366. Fe cation is bound at residue His366.

The protein belongs to the homogentisate dioxygenase family. In terms of assembly, hexamer; dimer of trimers. It depends on Fe cation as a cofactor.

The enzyme catalyses homogentisate + O2 = 4-maleylacetoacetate + H(+). Its pathway is amino-acid degradation; L-phenylalanine degradation; acetoacetate and fumarate from L-phenylalanine: step 4/6. In terms of biological role, involved in the catabolism of homogentisate (2,5-dihydroxyphenylacetate or 2,5-OH-PhAc), a central intermediate in the degradation of phenylalanine and tyrosine. Catalyzes the oxidative ring cleavage of the aromatic ring of homogentisate to yield maleylacetoacetate. The sequence is that of Homogentisate 1,2-dioxygenase from Xanthomonas oryzae pv. oryzae (strain KACC10331 / KXO85).